Here is a 220-residue protein sequence, read N- to C-terminus: MSVQQRRLPVYKKILEENKKKWMIKEFLEYRLSKYGYIDSEILKTPLGTRIVIYAERPSRIIGRKGAIVKEVSNILATKLGVENPQIDVIDVSKIEAPEMFPKVVAYRIANAMAKGVRFRRVMFAAIRQLTEAGAKGFEIVVSGKLSTERARFEKQTFGKLYKIGYDAKNRVRRAVVHVLLKPGIYGIEVRIAPASLQYSDEYKIKPPVRPEAAAQQQQQ.

A KH type-2 domain is found at 24–93; sequence IKEFLEYRLS…NPQIDVIDVS (70 aa).

Belongs to the universal ribosomal protein uS3 family. In terms of assembly, part of the 30S ribosomal subunit.

Binds the lower part of the 30S subunit head. In Pyrobaculum arsenaticum (strain DSM 13514 / JCM 11321 / PZ6), this protein is Small ribosomal subunit protein uS3.